Reading from the N-terminus, the 440-residue chain is Chaperone SurA (440 aa).

A signal peptide spans 1-25; the sequence is MGTKLSSRSPFSLPFLTLLAGMAIA. PpiC domains lie at 182–283 and 294–392; these read SDEY…KLVE and IDQT…QVIE.

It localises to the periplasm. The enzyme catalyses [protein]-peptidylproline (omega=180) = [protein]-peptidylproline (omega=0). Chaperone involved in the correct folding and assembly of outer membrane proteins. Recognizes specific patterns of aromatic residues and the orientation of their side chains, which are found more frequently in integral outer membrane proteins. May act in both early periplasmic and late outer membrane-associated steps of protein maturation. This is Chaperone SurA from Nitrosospira multiformis (strain ATCC 25196 / NCIMB 11849 / C 71).